The primary structure comprises 587 residues: Potassium-transporting ATPase potassium-binding subunit (587 aa).

The next 4 helical transmembrane spans lie at 1–21 (MSTSVAGVLAVALLVAALWVT), 60–80 (PVYARSVLAFSLVSVLLLYLL), 89–109 (LNLGFGAVGPALAWNTAVSFM), and 131–151 (GLAVQNFVSAAVGIAVAIAVV). Residues 162-188 (AVGGPGGPNGPGGPGGPNGPGAGSRDD) form a disordered region. Over residues 164–183 (GGPGGPNGPGGPGGPNGPGA) the composition is skewed to gly residues. 7 helical membrane passes run 208-228 (IRILLPVCVIAAIVLVAGGAI), 280-300 (PTSWTNLVEIFLLLAIAFSLP), 314-334 (LAIVAVMAVLALGSFAVNAAF), 409-429 (GLYGMLVLAVVTVFVAGLMIG), 449-469 (LYFLATPAIALLGTGVAMGLP), 514-534 (ALGLAMLFGRLLPMLLVLGMA), and 557-577 (FAGMLGAIALIIVALTFFPAL).

It belongs to the KdpA family. In terms of assembly, the system is composed of three essential subunits: KdpA, KdpB and KdpC.

Its subcellular location is the cell membrane. Functionally, part of the high-affinity ATP-driven potassium transport (or Kdp) system, which catalyzes the hydrolysis of ATP coupled with the electrogenic transport of potassium into the cytoplasm. This subunit binds the extracellular potassium ions and delivers the ions to the membrane domain of KdpB through an intramembrane tunnel. The sequence is that of Potassium-transporting ATPase potassium-binding subunit from Frankia alni (strain DSM 45986 / CECT 9034 / ACN14a).